Here is a 96-residue protein sequence, read N- to C-terminus: Non-specific lipid-transfer protein 2 (96 aa).

Positions 1 to 27 (MMRRLAVLVLAVAMVAACGGGVVGVAG) are cleaved as a signal peptide. 4 cysteine pairs are disulfide-bonded: cysteine 30/cysteine 62, cysteine 38/cysteine 52, cysteine 53/cysteine 88, and cysteine 64/cysteine 95.

Belongs to the plant LTP family. B11E subfamily.

Its function is as follows. Transfer lipids across membranes. May play a role in plant defense or in the biosynthesis of cuticle layers. The sequence is that of Non-specific lipid-transfer protein 2 (LTP-2) from Oryza sativa subsp. indica (Rice).